The primary structure comprises 29 residues: Kalata-B4 (29 aa).

Positions 1-29 (GLPVCGETCVGGTCNTPGCTCSWPVCTRD) form a cross-link, cyclopeptide (Gly-Asp). 3 disulfides stabilise this stretch: cysteine 5–cysteine 19, cysteine 9–cysteine 21, and cysteine 14–cysteine 26.

In terms of processing, this is a cyclic peptide.

Its function is as follows. Probably participates in a plant defense mechanism. The polypeptide is Kalata-B4 (Oldenlandia affinis).